A 374-amino-acid chain; its full sequence is Protein RecA (374 aa).

77 to 84 contributes to the ATP binding site; it reads GPESSGKT. The interval 355–374 is disordered; sequence AAKTAAADKSAPAKASEAAA.

This sequence belongs to the RecA family.

The protein resides in the cytoplasm. Functionally, can catalyze the hydrolysis of ATP in the presence of single-stranded DNA, the ATP-dependent uptake of single-stranded DNA by duplex DNA, and the ATP-dependent hybridization of homologous single-stranded DNAs. It interacts with LexA causing its activation and leading to its autocatalytic cleavage. The protein is Protein RecA of Synechococcus sp. (strain CC9605).